The sequence spans 285 residues: Retron Ec67 DNA adenine methylase (285 aa).

Positions 7, 11, 51, and 179 each coordinate S-adenosyl-L-methionine.

It belongs to the N(4)/N(6)-methyltransferase family.

The catalysed reaction is a 2'-deoxyadenosine in DNA + S-adenosyl-L-methionine = an N(6)-methyl-2'-deoxyadenosine in DNA + S-adenosyl-L-homocysteine + H(+). In terms of biological role, an alpha subtype methylase that recognizes the double-stranded sequence 5'-GATC-3' and methylates A-2 on both strands. May play a regulatory role in the functions of the retron. This is Retron Ec67 DNA adenine methylase from Escherichia coli.